Reading from the N-terminus, the 433-residue chain is MSQLRTTKAGLVACGMICAFIFLYLRNPGPEEAEAEAEAEPTNPAVVECGFYPDELCSALFDGKKAAPQIAQFCKPPQNSEVPARLRTPGNCSRLARGLHFITRPLSAEEGNFSLAYVIHAPRELVMFVRLLRAIYAPQNVYCIHSDENAPKKFKSAMQTFVDCFGNIFLSSKTQKVAHDNLRRLQAEIDCMRDLVHSPFQWHYVMNLCGQEFPIKTNKEIIYDIRTRWKGKNITPGVTPPANSKPKTGQGPPKPSPDENSYTAPNTIFKQSPPHNLTISSGSAHYALTRKFVEFVLTDPRAKDMLQWSKDIQSPEKHYWVTLNRLKDAPGATPDAGWEGHIRATKWRTEAGDGRKGCTDHDAQDTCVYGLGDLPGLIRLPAFFATLEPSSDPLVGVCLERRHRLRALQQAEVPPEPHWQFPQQSHFNSQPHH.

The Cytoplasmic segment spans residues 1–8 (MSQLRTTK). Residues 9–25 (AGLVACGMICAFIFLYL) traverse the membrane as a helical; Signal-anchor for type II membrane protein segment. The Extracellular segment spans residues 26–433 (RNPGPEEAEA…QSHFNSQPHH (408 aa)). Intrachain disulfides connect C57-C209, C143-C358, C164-C191, and C367-C398. N-linked (GlcNAc...) asparagine glycosylation is present at N112. Positions 233 to 275 (NITPGVTPPANSKPKTGQGPPKPSPDENSYTAPNTIFKQSPPH) are disordered. Over residues 258 to 275 (DENSYTAPNTIFKQSPPH) the composition is skewed to polar residues. A disordered region spans residues 413-433 (VPPEPHWQFPQQSHFNSQPHH). Over residues 421–433 (FPQQSHFNSQPHH) the composition is skewed to polar residues.

The protein belongs to the glycosyltransferase 14 family.

The protein resides in the golgi apparatus membrane. The protein operates within protein modification; protein glycosylation. Its function is as follows. Probable glycosyltransferase. In Mus musculus (Mouse), this protein is Probable beta-1,3-galactosyl-O-glycosyl-glycoprotein beta-1,6-N-acetylglucosaminyltransferase 7.